We begin with the raw amino-acid sequence, 848 residues long: Dolabradiene synthase KSL4, chloroplastic (848 aa).

A chloroplast-targeting transit peptide spans 1-64 (MASLSFASSH…SRMPRNVDTH (64 aa)). The disordered stretch occupies residues 148-168 (QRSDGSWGPDGGSGDHPSSPL). Mg(2+) contacts are provided by aspartate 597, aspartate 601, asparagine 742, serine 746, and glutamate 750. Positions 597-601 (DDLFD) match the DDXXD motif motif.

The protein belongs to the terpene synthase family. Mg(2+) serves as cofactor.

It is found in the plastid. It localises to the chloroplast. The catalysed reaction is ent-copalyl diphosphate = dolabradiene + diphosphate. Its function is as follows. Involved in the production of antifungal dolabralexin phytoalexins in response to biotic and abiotic stresses. In response to fungal infection and in associtation with AN2, is involved in the production dolabradiene, a type of antifungal phytoalexin. Converts ent-copalyl disphosphate (ent-CPP) to dolabradiene. This is Dolabradiene synthase KSL4, chloroplastic from Zea mays (Maize).